The chain runs to 188 residues: dCTP deaminase (188 aa).

DCTP-binding positions include 111–116, 135–137, Gln156, Tyr170, and Gln180; these read KSTYAR and TLE. Catalysis depends on Glu137, which acts as the Proton donor/acceptor.

It belongs to the dCTP deaminase family. As to quaternary structure, homotrimer.

It carries out the reaction dCTP + H2O + H(+) = dUTP + NH4(+). The protein operates within pyrimidine metabolism; dUMP biosynthesis; dUMP from dCTP (dUTP route): step 1/2. Catalyzes the deamination of dCTP to dUTP. This chain is dCTP deaminase, found in Cupriavidus metallidurans (strain ATCC 43123 / DSM 2839 / NBRC 102507 / CH34) (Ralstonia metallidurans).